The primary structure comprises 299 residues: Class II hydrophobin C (299 aa).

The N-terminal stretch at 1 to 17 is a signal peptide; sequence MKFLTVAAAIFASTSLA. N-linked (GlcNAc...) asparagine glycans are attached at residues Asn-39, Asn-78, and Asn-91. 4 cysteine pairs are disulfide-bonded: Cys-232-Cys-281, Cys-242-Cys-272, Cys-243-Cys-255, and Cys-282-Cys-293.

This sequence belongs to the cerato-ulmin hydrophobin family.

It is found in the secreted. Its subcellular location is the cell wall. The protein resides in the vacuole. It localises to the cytoplasmic vesicle. Aerial growth, conidiation, and dispersal of filamentous fungi in the environment rely upon a capability of their secreting small amphipathic proteins called hydrophobins (HPBs) with low sequence identity. Class I can self-assemble into an outermost layer of rodlet bundles on aerial cell surfaces, conferring cellular hydrophobicity that supports fungal growth, development and dispersal; whereas Class II form highly ordered films at water-air interfaces through intermolecular interactions but contribute nothing to the rodlet structure. Hyd2C contributes to certain cell wall-related features, such as hydrophobicity but is not involved in cell wall-related events during fungal proliferation in host hemocoel. Does not contribute to conidial hydrophobicity. Involved actively in the asexual development. This Beauveria bassiana (strain ARSEF 2860) (White muscardine disease fungus) protein is Class II hydrophobin C.